A 353-amino-acid polypeptide reads, in one-letter code: Histidinol-phosphate aminotransferase (353 aa).

Lys-211 is subject to N6-(pyridoxal phosphate)lysine.

This sequence belongs to the class-II pyridoxal-phosphate-dependent aminotransferase family. Histidinol-phosphate aminotransferase subfamily. In terms of assembly, homodimer. It depends on pyridoxal 5'-phosphate as a cofactor.

The enzyme catalyses L-histidinol phosphate + 2-oxoglutarate = 3-(imidazol-4-yl)-2-oxopropyl phosphate + L-glutamate. The protein operates within amino-acid biosynthesis; L-histidine biosynthesis; L-histidine from 5-phospho-alpha-D-ribose 1-diphosphate: step 7/9. This is Histidinol-phosphate aminotransferase from Klebsiella pneumoniae (strain 342).